A 215-amino-acid polypeptide reads, in one-letter code: Ceramide-1-phosphate transfer protein (215 aa).

D57, K61, R107, R111, and H151 together coordinate an N-acylsphingoid base 1-phosphate.

This sequence belongs to the GLTP family.

The protein resides in the cytoplasm. It localises to the cytosol. Its subcellular location is the golgi apparatus. The protein localises to the trans-Golgi network membrane. It is found in the cell membrane. The protein resides in the endosome membrane. It localises to the nucleus outer membrane. It carries out the reaction N-(hexadecanoyl)-sphing-4-enine-1-phosphate(in) = N-(hexadecanoyl)-sphing-4-enine-1-phosphate(out). The enzyme catalyses N-(9Z-octadecenoyl)-sphing-4-enine-1-phosphate(in) = N-(9Z-octadecenoyl)-sphing-4-enine-1-phosphate(out). In terms of biological role, mediates the intracellular transfer of ceramide-1-phosphate (C1P) between organelle membranes and the cell membrane. Required for normal structure of the Golgi stacks. Can bind phosphoceramides with a variety of aliphatic chains, but has a preference for lipids with saturated C16:0 or monounsaturated C18:1 aliphatic chains, and is inefficient with phosphoceramides containing lignoceryl (C24:0). Plays a role in the regulation of the cellular levels of ceramide-1-phosphate, and thereby contributes to the regulation of phospholipase PLA2G4A activity and the release of arachidonic acid. Has no activity with galactosylceramide, lactosylceramide, sphingomyelin, phosphatidylcholine, phosphatidic acid and ceramide. C1P transfer is stimulated by phosphatidylserine in C1P source vesicles. Regulates autophagy and pyroptosis, but not apoptosis. The chain is Ceramide-1-phosphate transfer protein (cptp) from Xenopus tropicalis (Western clawed frog).